Here is a 571-residue protein sequence, read N- to C-terminus: Proline--tRNA ligase (571 aa).

The protein belongs to the class-II aminoacyl-tRNA synthetase family. ProS type 1 subfamily. Homodimer.

The protein resides in the cytoplasm. It carries out the reaction tRNA(Pro) + L-proline + ATP = L-prolyl-tRNA(Pro) + AMP + diphosphate. Catalyzes the attachment of proline to tRNA(Pro) in a two-step reaction: proline is first activated by ATP to form Pro-AMP and then transferred to the acceptor end of tRNA(Pro). As ProRS can inadvertently accommodate and process non-cognate amino acids such as alanine and cysteine, to avoid such errors it has two additional distinct editing activities against alanine. One activity is designated as 'pretransfer' editing and involves the tRNA(Pro)-independent hydrolysis of activated Ala-AMP. The other activity is designated 'posttransfer' editing and involves deacylation of mischarged Ala-tRNA(Pro). The misacylated Cys-tRNA(Pro) is not edited by ProRS. This is Proline--tRNA ligase from Pseudomonas aeruginosa (strain LESB58).